The chain runs to 62 residues: Potassium channel toxin alpha-KTx 18.3 (62 aa).

Residues 1 to 26 form the signal peptide; the sequence is MHFSGVAFILISMVLIGSIFETTVEA. 3 cysteine pairs are disulfide-bonded: Cys-34/Cys-53, Cys-39/Cys-58, and Cys-43/Cys-60.

This sequence belongs to the short scorpion toxin superfamily. Potassium channel inhibitor family. Alpha-KTx 18 subfamily. In terms of tissue distribution, expressed by the venom gland.

It localises to the secreted. Probable voltage-gated potassium channel inhibitor. The sequence is that of Potassium channel toxin alpha-KTx 18.3 from Tityus discrepans (Venezuelan scorpion).